Here is a 340-residue protein sequence, read N- to C-terminus: Extracellular matrix protein-binding protein emp (340 aa).

The signal sequence occupies residues 1 to 26 (MKKKLLVLTMSTLFATQLINSNHAKA).

Its subcellular location is the cell surface. Adhesin that binds to the host cell extracellular matrix proteins fibronectin, fibrinogen, collagen, and vitronectin. In Staphylococcus aureus (strain Mu50 / ATCC 700699), this protein is Extracellular matrix protein-binding protein emp (emp).